We begin with the raw amino-acid sequence, 264 residues long: Vitellin-degrading protease (264 aa).

A signal peptide spans 1–15 (MTNSLLICFTILGLA). Residues 16 to 27 (ASSPTKPIGDIR) constitute a propeptide, activation peptide. The Peptidase S1 domain occupies 28-253 (IVGGEDIVIT…LREWVDENIT (226 aa)). Cys53 and Cys69 form a disulfide bridge. Active-site charge relay system residues include His68 and Asp113. Residues Cys178 and Cys194 are joined by a disulfide bond. Asp203 contributes to the substrate binding site. A disulfide bridge links Cys205 with Cys229. Ser209 acts as the Charge relay system in catalysis. Residue Asn251 is glycosylated (N-linked (GlcNAc...) asparagine).

It belongs to the peptidase S1 family. Post-translationally, cleavage after Arg-27 leads to beta-VTN protease and subsequent cleavage after Arg-89 leads to alpha-VTN.

In terms of biological role, responsible for the degradation of vitellin in eggs at the head pigmentation stage. This chain is Vitellin-degrading protease, found in Bombyx mori (Silk moth).